Reading from the N-terminus, the 189-residue chain is MYLVVGLGNIGKEYKKTRHNIGFDVVDIIAEKYNIEINRQKFKGSYGEGRIGNEKIILLKPSTYMNLSGESVIEAANFYKIDKENIIVIYDDMSIDIGKLRVRGKGSAGGHNGIKNIIQHLNSDIFPRVRVGIGQPDENVVNYVLGKFSKDEREIIEKVLAMSAKACISIVEDGVTEAMNKYNGVKIEV.

Position 14 (Y14) interacts with tRNA. H19 (proton acceptor) is an active-site residue. The tRNA site is built by Y64, N66, and N112.

Belongs to the PTH family. In terms of assembly, monomer.

It is found in the cytoplasm. The catalysed reaction is an N-acyl-L-alpha-aminoacyl-tRNA + H2O = an N-acyl-L-amino acid + a tRNA + H(+). Hydrolyzes ribosome-free peptidyl-tRNAs (with 1 or more amino acids incorporated), which drop off the ribosome during protein synthesis, or as a result of ribosome stalling. Functionally, catalyzes the release of premature peptidyl moieties from peptidyl-tRNA molecules trapped in stalled 50S ribosomal subunits, and thus maintains levels of free tRNAs and 50S ribosomes. The chain is Peptidyl-tRNA hydrolase from Clostridium botulinum (strain Kyoto / Type A2).